The primary structure comprises 669 residues: MSPIQVVVFALSRIFLLLFRLIKLIITPIQKSLGYLFGNYFDELDRKYRYKEDWYIIPYFLKSVFCYIIDVRRHRFQNWYLFIKQVQQNGDHLAISYTRPMAEKGEFQLETFTYIETYNIVLRLSHILHFDYNVQAGDYVAIDCTNKPLFVFLWLSLWNIGAIPAFLNYNTKGTPLVHSLKISNITQVFIDPDASNPIRESEEEIKNALPDVKLNYLEEQDLMHELLNSQSPEFLQQDNVRTPLGLTDFKPSMLIYTSGTTGLPKSAIMSWRKSSVGCQVFGHVLHMTNESTVFTAMPLFHSTAALLGACAILSHGGCLALSHKFSASTFWKQVYLTGATHIQYVGEVCRYLLHTPISKYEKMHKVKVAYGNGLRPDIWQDFRKRFNIEVIGEFYAATEAPFATTTFQKGDFGIGACRNYGTIIQWFLSFQQTLVRMDPNDDSVIYRNSKGFCEVAPVGEPGEMLMRIFFPKKPETSFQGYLGNAKETKSKVVRDVFRRGDAWYRCGDLLKADEYGLWYFLDRMGDTFRWKSENVSTTEVEDQLTASNKEQYAQVLVVGIKVPKYEGRAGFAVIKLTDNSLDITAKTKLLNDSLSRLNLPSYAMPLFVKFVDEIKMTDNHKILKKVYREQKLPKGLDGNDTIFWLKNYKRYEVLTAADWEAIDAQTIKL.

Residues 1 to 5 (MSPIQ) lie on the Cytoplasmic side of the membrane. A helical membrane pass occupies residues 6–26 (VVVFALSRIFLLLFRLIKLII). Residues 27 to 148 (TPIQKSLGYL…YVAIDCTNKP (122 aa)) are Extracellular-facing. A helical transmembrane segment spans residues 149-169 (LFVFLWLSLWNIGAIPAFLNY). Residues 170-270 (NTKGTPLVHS…TGLPKSAIMS (101 aa)) lie on the Cytoplasmic side of the membrane. 256-267 (YTSGTTGLPKSA) serves as a coordination point for ATP. The stretch at 271-339 (WRKSSVGCQV…FWKQVYLTGA (69 aa)) is an intramembrane region. The Cytoplasmic segment spans residues 340–669 (THIQYVGEVC…EAIDAQTIKL (330 aa)). The FACS signature appears at 501 to 551 (DAWYRCGDLLKADEYGLWYFLDRMGDTFRWKSENVSTTEVEDQLTASNKEQ). A C-terminal peroxisome targeting signal (PTS1) motif is present at residues 667–669 (IKL).

This sequence belongs to the ATP-dependent AMP-binding enzyme family. As to quaternary structure, interacts with fatty acyl-CoA synthetases FAA1 and FAA4.

Its subcellular location is the lipid droplet. The protein resides in the cell membrane. It localises to the peroxisome membrane. It is found in the peroxisome. The catalysed reaction is a very long-chain fatty acid + ATP + CoA = a very long-chain fatty acyl-CoA + AMP + diphosphate. It catalyses the reaction tetracosanoate + ATP + CoA = tetracosanoyl-CoA + AMP + diphosphate. Acyl-CoA synthetase required for both the import of long chain fatty acids (LCFAs) (C14-C18) and the activation very long chain fatty acids (VLCFAs) (C20-C26) by esterification of the fatty acids into metabolically active CoA-thioesters for subsequent degradation or incorporation into phospholipids. The transport and fatty acyl-CoA synthetase activities are genetically separable and are thus independent activities. Esterifies VLCFAs in the peroxisome matrix. The VLCFAs are actively transported into peroxisomes by a PXA1-PXA2 heterodimeric transporter in the peroxisomal membrane. This Saccharomyces cerevisiae (strain ATCC 204508 / S288c) (Baker's yeast) protein is Very long-chain fatty acid transport protein (FAT1).